Here is a 162-residue protein sequence, read N- to C-terminus: NAD(P)H-quinone oxidoreductase subunit N (162 aa).

This sequence belongs to the complex I NdhN subunit family. As to quaternary structure, NDH-1 can be composed of about 15 different subunits; different subcomplexes with different compositions have been identified which probably have different functions.

It is found in the cellular thylakoid membrane. The catalysed reaction is a plastoquinone + NADH + (n+1) H(+)(in) = a plastoquinol + NAD(+) + n H(+)(out). It catalyses the reaction a plastoquinone + NADPH + (n+1) H(+)(in) = a plastoquinol + NADP(+) + n H(+)(out). In terms of biological role, NDH-1 shuttles electrons from an unknown electron donor, via FMN and iron-sulfur (Fe-S) centers, to quinones in the respiratory and/or the photosynthetic chain. The immediate electron acceptor for the enzyme in this species is believed to be plastoquinone. Couples the redox reaction to proton translocation, and thus conserves the redox energy in a proton gradient. Cyanobacterial NDH-1 also plays a role in inorganic carbon-concentration. This Trichormus variabilis (strain ATCC 29413 / PCC 7937) (Anabaena variabilis) protein is NAD(P)H-quinone oxidoreductase subunit N.